The sequence spans 313 residues: Olfactory receptor 56A4 (313 aa).

At 1 to 28 (MASPSNDSTAPVSEFLLICFPNFQSWQH) the chain is on the extracellular side. N-linked (GlcNAc...) asparagine glycosylation is present at asparagine 6. Residues 29 to 49 (WLSLPLSLLFLLAMGANTTLL) form a helical membrane-spanning segment. Residues 50–57 (ITIQLEAS) are Cytoplasmic-facing. A helical transmembrane segment spans residues 58–78 (LHQPLYYLLSLLSLLDIVLCL). The Extracellular segment spans residues 79–102 (TVIPKVLAIFWFDLRSISFPACFL). The cysteines at positions 100 and 192 are disulfide-linked. A helical transmembrane segment spans residues 103 to 123 (QMFIMNSFLTMESCTFMVMAY). Over 124-142 (DRYVAICHPLRYPSIITDQ) the chain is Cytoplasmic. The helical transmembrane segment at 143–163 (FVARAVVFVIARNAFVSLPVP) threads the bilayer. Topologically, residues 164–199 (MLSARLRYCAGNIIKNCICSNLSVSKLSCDDITFNQ) are extracellular. An N-linked (GlcNAc...) asparagine glycan is attached at asparagine 184. A helical transmembrane segment spans residues 200 to 220 (LYQFVAGWTLLGSDLILIVIS). Residues 221–240 (YSFILKVVLRIKAEGAVAKA) are Cytoplasmic-facing. Residues 241–261 (LSTCGSHFILILFFSTVLLVL) form a helical membrane-spanning segment. Over 262–276 (VITNLARKRIPPDVP) the chain is Extracellular. The chain crosses the membrane as a helical span at residues 277 to 297 (ILLNILHHLIPPALNPIVYGV). Residues 298–313 (RTKEIKQGIQNLLKRL) lie on the Cytoplasmic side of the membrane.

It belongs to the G-protein coupled receptor 1 family.

The protein resides in the cell membrane. Functionally, odorant receptor. The sequence is that of Olfactory receptor 56A4 (OR56A4) from Homo sapiens (Human).